The chain runs to 152 residues: MKHPFPQFPPILVIYCFCMLQIPSSGASPPLAGPPDGLDAVDPERLAHFLNQRETCSNQPKESRDVYKRFLFHYSRAWKSTHPVNSEFAPVHPLMRLAAKLPSRRMKRLPRLLHTDSRMATIDFPKKDPTTSLGRPFFLFRPRNGRYTDKVQ.

The signal sequence occupies residues 1-26; that stretch reads MKHPFPQFPPILVIYCFCMLQIPSSG. 3 propeptides span residues 27-69, 70-105, and 106-108; these read ASPP…VYKR, FLFH…PSRR, and MKR. Residue Asn-144 is modified to Asparagine amide. The propeptide occupies 147 to 152; that stretch reads YTDKVQ.

This sequence belongs to the NmU family. Expressed in the CNS, spleen and testis. Specifically expressed in the suprachiasmatic nuclei (SCN) of the hypothalamus.

It localises to the secreted. Implicated in the regulation of circadian rhythms through autocrine and/or paracrine actions. Stimulates the contraction of rectum and elevation of blood pressure. This Rattus norvegicus (Rat) protein is Neuromedin-S (Nms).